The primary structure comprises 306 residues: Formamidopyrimidine-DNA glycosylase (306 aa).

The active-site Schiff-base intermediate with DNA is the Pro2. Residue Glu3 is the Proton donor of the active site. Lys58 functions as the Proton donor; for beta-elimination activity in the catalytic mechanism. Positions 114, 136, and 179 each coordinate DNA. Residues 270 to 306 (SVYDREGEACRTSGCRGTVERIVQAGRSTFYCPHCQK) form an FPG-type zinc finger. The Proton donor; for delta-elimination activity role is filled by Arg296.

This sequence belongs to the FPG family. As to quaternary structure, monomer. Zn(2+) serves as cofactor.

The catalysed reaction is Hydrolysis of DNA containing ring-opened 7-methylguanine residues, releasing 2,6-diamino-4-hydroxy-5-(N-methyl)formamidopyrimidine.. It carries out the reaction 2'-deoxyribonucleotide-(2'-deoxyribose 5'-phosphate)-2'-deoxyribonucleotide-DNA = a 3'-end 2'-deoxyribonucleotide-(2,3-dehydro-2,3-deoxyribose 5'-phosphate)-DNA + a 5'-end 5'-phospho-2'-deoxyribonucleoside-DNA + H(+). Functionally, involved in base excision repair of DNA damaged by oxidation or by mutagenic agents. Acts as a DNA glycosylase that recognizes and removes damaged bases. Has a preference for oxidized purines, such as 7,8-dihydro-8-oxoguanine (8-oxoG). Has AP (apurinic/apyrimidinic) lyase activity and introduces nicks in the DNA strand. Cleaves the DNA backbone by beta-delta elimination to generate a single-strand break at the site of the removed base with both 3'- and 5'-phosphates. The sequence is that of Formamidopyrimidine-DNA glycosylase from Sinorhizobium medicae (strain WSM419) (Ensifer medicae).